A 122-amino-acid chain; its full sequence is Large ribosomal subunit protein bL12 (122 aa).

It belongs to the bacterial ribosomal protein bL12 family. In terms of assembly, homodimer. Part of the ribosomal stalk of the 50S ribosomal subunit. Forms a multimeric L10(L12)X complex, where L10 forms an elongated spine to which 2 to 4 L12 dimers bind in a sequential fashion. Binds GTP-bound translation factors.

Its function is as follows. Forms part of the ribosomal stalk which helps the ribosome interact with GTP-bound translation factors. Is thus essential for accurate translation. The chain is Large ribosomal subunit protein bL12 from Staphylococcus saprophyticus subsp. saprophyticus (strain ATCC 15305 / DSM 20229 / NCIMB 8711 / NCTC 7292 / S-41).